A 428-amino-acid polypeptide reads, in one-letter code: C4-dicarboxylate transport protein (428 aa).

8 consecutive transmembrane segments (helical) span residues 8 to 28 (SLYF…HFYP), 44 to 64 (LIKM…IAGM), 76 to 96 (VALL…LIIV), 142 to 162 (IGAF…LFGF), 184 to 204 (VIFG…FGAM), 222 to 242 (LIIC…GSIA), 326 to 346 (IFHQ…AAGV), and 352 to 372 (IVLA…LALI).

It belongs to the dicarboxylate/amino acid:cation symporter (DAACS) (TC 2.A.23) family.

The protein resides in the cell inner membrane. In terms of biological role, responsible for the transport of dicarboxylates such as succinate, fumarate, and malate from the periplasm across the membrane. In Enterobacter sp. (strain 638), this protein is C4-dicarboxylate transport protein.